The chain runs to 131 residues: MSEGKEKWGVAHIYASFNNTIITVTDLTGAETITKSSGGMVVKQDRNESSPYAAMQMAGNVAQAAREKGIVGLHVKVRAPGRGKQRSPGPGAQAAIRALARAGMRIGLIEDVTPVPHDSIRPKGGRRGRRV.

This sequence belongs to the universal ribosomal protein uS11 family. Part of the 30S ribosomal subunit.

Its function is as follows. Located on the platform of the 30S subunit. This is Small ribosomal subunit protein uS11 from Methanospirillum hungatei JF-1 (strain ATCC 27890 / DSM 864 / NBRC 100397 / JF-1).